The primary structure comprises 52 residues: Creatine kinase B-type (52 aa).

One can recognise a Phosphagen kinase C-terminal domain in the interval A1–V52. The region spanning A1 to V52 is the Phosphagen kinase N-terminal domain. ATP contacts are provided by R13 and R47.

The protein belongs to the ATP:guanido phosphotransferase family. As to quaternary structure, dimer of identical or non-identical chains, which can be either B (brain type) or M (muscle type). With MM being the major form in skeletal muscle and myocardium, MB existing in myocardium, and BB existing in many tissues, especially brain. Expressed in rectal gland, brain, skeletal muscle (at protein level).

It localises to the cytoplasm. The protein resides in the cytosol. Its subcellular location is the mitochondrion. The protein localises to the basal cell membrane. The enzyme catalyses creatine + ATP = N-phosphocreatine + ADP + H(+). Reversibly catalyzes the transfer of phosphate between ATP and various phosphogens (e.g. creatine phosphate). Creatine kinase isoenzymes play a central role in energy transduction in tissues with large, fluctuating energy demands, such as skeletal muscle, heart, brain and spermatozoa. This is Creatine kinase B-type from Squalus acanthias (Spiny dogfish).